The chain runs to 182 residues: Transcription termination/antitermination protein NusG (182 aa).

The 31-residue stretch at 131–161 (GEVVRVNDGPFADFNGTVEEVDYEKSRLKVS) folds into the KOW domain.

It belongs to the NusG family.

Functionally, participates in transcription elongation, termination and antitermination. The polypeptide is Transcription termination/antitermination protein NusG (Vibrio cholerae serotype O1 (strain ATCC 39315 / El Tor Inaba N16961)).